The following is a 122-amino-acid chain: Large ribosomal subunit protein uL14c (122 aa).

It belongs to the universal ribosomal protein uL14 family. Part of the 50S ribosomal subunit.

The protein localises to the plastid. It localises to the chloroplast. Its function is as follows. Binds to 23S rRNA. This is Large ribosomal subunit protein uL14c from Lotus japonicus (Lotus corniculatus var. japonicus).